The chain runs to 317 residues: Porphobilinogen deaminase (317 aa).

Cysteine 245 is modified (S-(dipyrrolylmethanemethyl)cysteine).

This sequence belongs to the HMBS family. As to quaternary structure, monomer. The cofactor is dipyrromethane.

It carries out the reaction 4 porphobilinogen + H2O = hydroxymethylbilane + 4 NH4(+). The protein operates within porphyrin-containing compound metabolism; protoporphyrin-IX biosynthesis; coproporphyrinogen-III from 5-aminolevulinate: step 2/4. It participates in porphyrin-containing compound metabolism; chlorophyll biosynthesis. Its function is as follows. Tetrapolymerization of the monopyrrole PBG into the hydroxymethylbilane pre-uroporphyrinogen in several discrete steps. The protein is Porphobilinogen deaminase of Parasynechococcus marenigrum (strain WH8102).